We begin with the raw amino-acid sequence, 142 residues long: Hemoglobin subunit alpha-B (142 aa).

The region spanning 2 to 142 is the Globin domain; sequence PFSASDRHDI…VSETLYSKYR (141 aa). Gln59 provides a ligand contact to O2. His88 is a heme b binding site.

This sequence belongs to the globin family. As to quaternary structure, heterotetramer of either two alpha-B chains or two alpha-C chains and two beta chains. The two major hemoglobins, B and C, associate upon deoxygenation to form a trimer of tetramers, BC2, that has a much lower affinity for oxygen than either component alone. Red blood cells.

The alpha-B chain is a component of adult hemoglobin B. The chain is Hemoglobin subunit alpha-B from Aquarana catesbeiana (American bullfrog).